Here is a 376-residue protein sequence, read N- to C-terminus: MSPPNQSEEGLPQEASNRSLNATETPGDWDPGLLQALKVSLVVVLSIITLATVLSNAFVLTTILLTRKLHTPANYLIGSLATTDLLVSILVMPISIAYTTTRTWNFGQILCDIWVSSDITCCTASILHLCVIALDRYWAITDALEYSKRRTAGHAGAMIAAVWVISICISIPPLFWRQAQAQEEMSDCLVNTSQISYTIYSTCGAFYIPSVLLIILYSRIYRAARSRILNPPSLSGKRFTTAHLITGSAGSSLCSLNPSLHEGHMHPGSPLFFNHVRIKLADSVLERKRISAARERKATKTLGIILGAFIVCWLPFFVVSLVLPICRDSCWIHPALFDFFTWLGYLNSLINPIIYTVFNEDFRQAFQKVVHFRKAS.

Positions 1-22 are disordered; the sequence is MSPPNQSEEGLPQEASNRSLNA. N5, N17, and N21 each carry an N-linked (GlcNAc...) asparagine glycan. A run of 3 helical transmembrane segments spans residues 39–64, 76–97, and 110–134; these read VSLV…TTIL, LIGS…ISIA, and LCDI…VIAL. Cysteines 111 and 188 form a disulfide. The serotonin site is built by D118 and C122. A DRY motif; important for ligand-induced conformation changes motif is present at residues 135–137; sequence DRY. 4 consecutive transmembrane segments (helical) span residues 155 to 176, 195 to 218, 300 to 325, and 335 to 358; these read AGAM…PLFW, ISYT…ILYS, KTLG…VLPI, and ALFD…YTVF. S320 contacts serotonin. An NPxxY motif; important for ligand-induced conformation changes and signaling motif is present at residues 351-355; sequence NPIIY.

The protein belongs to the G-protein coupled receptor 1 family. In terms of assembly, homodimer. Heterodimer with HTR1B.

It localises to the cell membrane. G-protein coupled receptor for 5-hydroxytryptamine (serotonin). Also functions as a receptor for ergot alkaloid derivatives, various anxiolytic and antidepressant drugs and other psychoactive substances. Ligand binding causes a conformation change that triggers signaling via guanine nucleotide-binding proteins (G proteins) and modulates the activity of downstream effectors, such as adenylate cyclase. HTR1D is coupled to G(i)/G(o) G alpha proteins and mediates inhibitory neurotransmission by inhibiting adenylate cyclase activity. Regulates the release of 5-hydroxytryptamine in the brain, and thereby affects neural activity. May also play a role in regulating the release of other neurotransmitters. May play a role in vasoconstriction. This is 5-hydroxytryptamine receptor 1D (HTR1D) from Cavia porcellus (Guinea pig).